The chain runs to 281 residues: Pantothenate synthetase (281 aa).

30–37 (MGNLHLGH) is a binding site for ATP. Histidine 37 functions as the Proton donor in the catalytic mechanism. Position 61 (glutamine 61) interacts with (R)-pantoate. Glutamine 61 contributes to the beta-alanine binding site. Position 149 to 152 (149 to 152 (GRKD)) interacts with ATP. Position 155 (glutamine 155) interacts with (R)-pantoate. ATP is bound by residues isoleucine 178 and 186-189 (MSSR).

This sequence belongs to the pantothenate synthetase family. In terms of assembly, homodimer.

Its subcellular location is the cytoplasm. The enzyme catalyses (R)-pantoate + beta-alanine + ATP = (R)-pantothenate + AMP + diphosphate + H(+). The protein operates within cofactor biosynthesis; (R)-pantothenate biosynthesis; (R)-pantothenate from (R)-pantoate and beta-alanine: step 1/1. In terms of biological role, catalyzes the condensation of pantoate with beta-alanine in an ATP-dependent reaction via a pantoyl-adenylate intermediate. This chain is Pantothenate synthetase, found in Shewanella sediminis (strain HAW-EB3).